The primary structure comprises 150 residues: UPF0178 protein Sbal195_1808 (150 aa).

This sequence belongs to the UPF0178 family.

This chain is UPF0178 protein Sbal195_1808, found in Shewanella baltica (strain OS195).